A 154-amino-acid polypeptide reads, in one-letter code: 3-hydroxyacyl-[acyl-carrier-protein] dehydratase FabZ (154 aa).

His55 is a catalytic residue.

The protein belongs to the thioester dehydratase family. FabZ subfamily.

It localises to the cytoplasm. It catalyses the reaction a (3R)-hydroxyacyl-[ACP] = a (2E)-enoyl-[ACP] + H2O. Involved in unsaturated fatty acids biosynthesis. Catalyzes the dehydration of short chain beta-hydroxyacyl-ACPs and long chain saturated and unsaturated beta-hydroxyacyl-ACPs. The chain is 3-hydroxyacyl-[acyl-carrier-protein] dehydratase FabZ from Nitratidesulfovibrio vulgaris (strain ATCC 29579 / DSM 644 / CCUG 34227 / NCIMB 8303 / VKM B-1760 / Hildenborough) (Desulfovibrio vulgaris).